A 433-amino-acid polypeptide reads, in one-letter code: Glycerol-3-phosphate dehydrogenase [NAD(+)] (433 aa).

NAD(+)-binding positions include G17–G22, F49, and F117. K140 is a substrate binding site. A173 is a binding site for NAD(+). The disordered stretch occupies residues I187 to E246. Over residues N208 to S227 the composition is skewed to polar residues. K283 acts as the Proton acceptor in catalysis. Residues R349 and Q378 each contribute to the NAD(+) site. Substrate is bound at residue R349–N350.

The protein belongs to the NAD-dependent glycerol-3-phosphate dehydrogenase family.

The catalysed reaction is sn-glycerol 3-phosphate + NAD(+) = dihydroxyacetone phosphate + NADH + H(+). The polypeptide is Glycerol-3-phosphate dehydrogenase [NAD(+)] (Pyricularia oryzae (strain Y34) (Rice blast fungus)).